The following is a 304-amino-acid chain: Ornithine carbamoyltransferase (304 aa).

Carbamoyl phosphate-binding positions include 47–50 (STRT), arginine 98, and 125–128 (HPCQ). L-ornithine-binding positions include asparagine 156, aspartate 221, and 225-226 (SM). Carbamoyl phosphate contacts are provided by residues 262–263 (CL) and arginine 290.

This sequence belongs to the aspartate/ornithine carbamoyltransferase superfamily. OTCase family.

It localises to the cytoplasm. The enzyme catalyses carbamoyl phosphate + L-ornithine = L-citrulline + phosphate + H(+). Its pathway is amino-acid biosynthesis; L-arginine biosynthesis; L-arginine from L-ornithine and carbamoyl phosphate: step 1/3. Reversibly catalyzes the transfer of the carbamoyl group from carbamoyl phosphate (CP) to the N(epsilon) atom of ornithine (ORN) to produce L-citrulline. The protein is Ornithine carbamoyltransferase of Methanococcus aeolicus (strain ATCC BAA-1280 / DSM 17508 / OCM 812 / Nankai-3).